The following is a 365-amino-acid chain: WAT1-related protein At4g01440 (365 aa).

A run of 10 helical transmembrane segments spans residues 8 to 28 (WTPVIIMVMINSALGLANALV), 40 to 60 (VIATYRLAISTLFLAPIAFFW), 72 to 92 (ILVQLFFSALVGASLTQYFFL), 101 to 121 (TLACAFISMTPAITFVMALIF), 132 to 152 (AGMGMVMGALICIGGALLLTM), 181 to 201 (WIIGCVLLFAGSSCFGSWMLI), 213 to 233 (YSSTVVLSFFGTIQCALLSLI), 249 to 269 (IVTIVYAGAVAQGICTVGTSW), 277 to 297 (IFTSIFTPVGLIFATLFDFLI), and 302 to 322 (IFLGSVVGSGVVIFGLYIFLL). EamA domains follow at residues 25–144 (NALV…LICI) and 196–321 (GSWM…YIFL).

It belongs to the drug/metabolite transporter (DMT) superfamily. Plant drug/metabolite exporter (P-DME) (TC 2.A.7.4) family.

It is found in the membrane. The polypeptide is WAT1-related protein At4g01440 (Arabidopsis thaliana (Mouse-ear cress)).